Here is a 1119-residue protein sequence, read N- to C-terminus: Leucine-rich repeats and immunoglobulin-like domains protein 3 (1119 aa).

The N-terminal stretch at methionine 1 to alanine 24 is a signal peptide. Residues proline 38–serine 74 form the LRRNT domain. LRR repeat units lie at residues tryptophan 75–histidine 96, serine 99–serine 120, asparagine 122–lysine 142, serine 146–leucine 167, glutamine 168–asparagine 189, threonine 193–leucine 214, glutamine 216–glycine 237, alanine 240–glycine 261, asparagine 264–glycine 285, methionine 288–phenylalanine 309, lysine 312–glycine 333, leucine 336–glycine 357, serine 360–phenylalanine 382, lysine 387–glycine 408, and alanine 411–glutamine 432. Asparagine 122 and asparagine 156 each carry an N-linked (GlcNAc...) asparagine glycan. An N-linked (GlcNAc...) asparagine glycan is attached at asparagine 274. Residues asparagine 442, asparagine 469, and asparagine 515 are each glycosylated (N-linked (GlcNAc...) asparagine). Residues serine 444–aspartate 495 form the LRRCT domain. 3 Ig-like C2-type domains span residues proline 499 to threonine 598, proline 603 to threonine 692, and proline 697 to serine 783. Disulfide bonds link cysteine 520–cysteine 581 and cysteine 624–cysteine 676. N-linked (GlcNAc...) asparagine glycosylation is found at asparagine 688 and asparagine 729. The cysteines at positions 718 and 767 are disulfide-linked. A helical membrane pass occupies residues valine 810–isoleucine 830. Asparagine 905, asparagine 987, asparagine 999, and asparagine 1016 each carry an N-linked (GlcNAc...) asparagine glycan. The tract at residues serine 1073–glutamate 1093 is disordered. Over residues glutamate 1083 to glutamate 1093 the composition is skewed to basic and acidic residues.

In terms of assembly, interacts with EGFR, ERBB2 and ERBB4 (in vitro). As to expression, widely expressed.

The protein localises to the cell membrane. Its subcellular location is the cytoplasmic vesicle membrane. In terms of biological role, may play a role in craniofacial and inner ear morphogenesis during embryonic development. May act within the otic vesicle epithelium to control formation of the lateral semicircular canal in the inner ear, possibly by restricting the expression of NTN1. The polypeptide is Leucine-rich repeats and immunoglobulin-like domains protein 3 (LRIG3) (Homo sapiens (Human)).